A 525-amino-acid chain; its full sequence is Nucleolar complex protein 4 homolog B (525 aa).

A compositionally biased stretch (basic residues) spans 1–10 (MAARKAKHAF). Residues 1 to 21 (MAARKAKHAFRSQATQSDAER) form a disordered region. Helical transmembrane passes span 307 to 327 (AAYDVGGAISLLALNGLFILI), 358 to 378 (FFHLANLFLSSTHLPVYLVAA), and 386 to 406 (LALTAPPQVLLMIIPFICNLI).

The protein belongs to the CBF/MAK21 family.

It localises to the nucleus membrane. Its subcellular location is the nucleus. It is found in the nucleolus. This chain is Nucleolar complex protein 4 homolog B (noc4l-b), found in Xenopus laevis (African clawed frog).